A 1410-amino-acid chain; its full sequence is MADTDLFMECEEEELEPWQKISDVIEDSVVEDYNSVDKTTTVSVSQQPVSAPVPIAAHASVAGHLSTSTTVSSSGAQNSDSTKKTLVTLIANNNAGNPLVQQGGQPLILTQNPAPGLGTMVTQPVLRPVQVMQNANHVTSSPVASQPIFITTQGFPVRNVRPVQNAMNQVGIVLNVQQGQTVRPITLVPAPGTQFVKPTVGVPQVFSQMTPVRPGSTMPVRPTTNTFTTVIPATLTIRSTVPQSQSQQTKSTPSTSTTPTATQPTSLGQLAVQSPGQSNQTTNPKLAPSFPSPPAVSIASFVTVKRPGVTGENSNEVAKLVNTLNTIPSLGQSPGPVVVSNNSSAHGSQRTSGPESSMKVTSSIPVFDLQDGGRKICPRCNAQFRVTEALRGHMCYCCPEMVEYQKKGKSLDSEPSVPSAAKPPSPEKTAPVASTPSSTPIPALSPPTKVPEPNENVGDAVQTKLIMLVDDFYYGRDGGKVAQLTNFPKVATSFRCPHCTKRLKNNIRFMNHMKHHVELDQQNGEVDGHTICQHCYRQFSTPFQLQCHLENVHSPYESTTKCKICEWAFESEPLFLQHMKDTHKPGEMPYVCQVCQYRSSLYSEVDVHFRMIHEDTRHLLCPYCLKVFKNGNAFQQHYMRHQKRNVYHCNKCRLQFLFAKDKIEHKLQHHKTFRKPKQLEGLKPGTKVTIRASRGQPRTVPVSSNDTPPSALQEAAPLTSSMDPLPVFLYPPVQRSIQKRAVRKMSVMGRQTCLECSFEIPDFPNHFPTYVHCSLCRYSTCCSRAYANHMINNHVPRKSPKYLALFKNSVSGIKLACTSCTFVTSVGDAMAKHLVFNPSHRSSSILPRGLTWIAHSRHGQTRDRVHDRNVKNMYPPPSFPTNKAATVKSAGATPAEPEELLTPLAPALPSPASTATPPPTPTHPQALALPPLATEGAECLNVDDQDEGSPVTQEPELASGGGGSGGVGKKEQLSVKKLRVVLFALCCNTEQAAEHFRNPQRRIRRWLRRFQASQGENLEGKYLSFEAEEKLAEWVLTQREQQLPVNEETLFQKATKIGRSLEGGFKISYEWAVRFMLRHHLTPHARRAVAHTLPKDVAENAGLFIDFVQRQIHNQDLPLSMIVAIDEISLFLDTEVLSSDDRKENALQTVGTGEPWCDVVLAILADGTVLPTLVFYRGQMDQPANMPDSILLEAKESGYSDDEIMELWSTRVWQKHTACQRSKGMLVMDCHRTHLSEEVLAMLSASSTLPAVVPAGCSSKIQPLDVCIKRTVKNFLHKKWKEQAREMADTACDSDVLLQLVLVWLGEVLGVIGDCPELVQRSFLVASVLPGPDGNINSPTRNADMQEELIASLEEQLKLSGEHSESSTPRPRSSPEETIEPESLHQLFEGESETESFYGFEEADLDLMEI.

The interval 238 to 291 is disordered; the sequence is RSTVPQSQSQQTKSTPSTSTTPTATQPTSLGQLAVQSPGQSNQTTNPKLAPSFP. Residues 239–266 show a composition bias toward low complexity; sequence STVPQSQSQQTKSTPSTSTTPTATQPTS. The span at 267 to 284 shows a compositional bias: polar residues; the sequence is LGQLAVQSPGQSNQTTNP. Lysine 319 participates in a covalent cross-link: Glycyl lysine isopeptide (Lys-Gly) (interchain with G-Cter in SUMO2). The interval 332 to 361 is disordered; the sequence is QSPGPVVVSNNSSAHGSQRTSGPESSMKVT. The residue at position 333 (serine 333) is a Phosphoserine. Polar residues predominate over residues 345 to 361; it reads AHGSQRTSGPESSMKVT. A Glycyl lysine isopeptide (Lys-Gly) (interchain with G-Cter in SUMO2) cross-link involves residue lysine 359. Serine 363 carries the phosphoserine modification. A C2H2-type 1; atypical zinc finger spans residues 375–397; sequence KICPRCNAQFRVTEALRGHMCYC. The tract at residues 409–456 is disordered; it reads KSLDSEPSVPSAAKPPSPEKTAPVASTPSSTPIPALSPPTKVPEPNEN. Lysine 422 is covalently cross-linked (Glycyl lysine isopeptide (Lys-Gly) (interchain with G-Cter in SUMO2)). Serine 425 carries the post-translational modification Phosphoserine. At threonine 439 the chain carries Phosphothreonine. Position 445 is a phosphoserine (serine 445). Residue lysine 449 forms a Glycyl lysine isopeptide (Lys-Gly) (interchain with G-Cter in SUMO2) linkage. The residue at position 463 (threonine 463) is a Phosphothreonine. Residue lysine 489 forms a Glycyl lysine isopeptide (Lys-Gly) (interchain with G-Cter in SUMO2) linkage. 6 C2H2-type zinc fingers span residues 494-516, 530-553, 560-583, 590-613, 619-641, and 647-670; these read FRCPHCTKRLKNNIRFMNHMKHH, TICQHCYRQFSTPFQLQCHLENVH, TKCKICEWAFESEPLFLQHMKDTH, YVCQVCQYRSSLYSEVDVHFRMIH, LLCPYCLKVFKNGNAFQQHYMRH, and YHCNKCRLQFLFAKDKIEHKLQHH. A Glycyl lysine isopeptide (Lys-Gly) (interchain with G-Cter in SUMO2) cross-link involves residue lysine 629. Residue lysine 677 forms a Glycyl lysine isopeptide (Lys-Gly) (interchain with G-Cter in SUMO2) linkage. The segment at 693–715 is disordered; that stretch reads SRGQPRTVPVSSNDTPPSALQEA. Over residues 701–710 the composition is skewed to polar residues; sequence PVSSNDTPPS. The C2H2-type 8 zinc-finger motif lies at 771-794; it reads VHCSLCRYSTCCSRAYANHMINNH. Lysine 801 participates in a covalent cross-link: Glycyl lysine isopeptide (Lys-Gly) (interchain with G-Cter in SUMO2). The tract at residues 810–850 is required for interaction with CBX5; it reads VSGIKLACTSCTFVTSVGDAMAKHLVFNPSHRSSSILPRGL. The C2H2-type 9 zinc finger occupies 815-840; the sequence is LACTSCTFVTSVGDAMAKHLVFNPSH. Serine 856 is subject to Phosphoserine. Disordered stretches follow at residues 857–927 and 942–969; these read RHGQ…PQAL and VDDQDEGSPVTQEPELASGGGGSGGVGK. Over residues 860–870 the composition is skewed to basic and acidic residues; sequence QTRDRVHDRNV. Lysine 883 participates in a covalent cross-link: Glycyl lysine isopeptide (Lys-Gly) (interchain with G-Cter in SUMO2). Residues 892–915 show a composition bias toward low complexity; the sequence is ATPAEPEELLTPLAPALPSPASTA. The HTH CENPB-type domain maps to 1015–1085; that stretch reads GENLEGKYLS…MLRHHLTPHA (71 aa). The DDE-1 domain occupies 1117 to 1323; sequence LPLSMIVAID…DCPELVQRSF (207 aa). At serine 1338 the chain carries Phosphoserine. Residues 1340–1360 adopt a coiled-coil conformation; sequence TRNADMQEELIASLEEQLKLS. The interval 1360 to 1400 is disordered; that stretch reads SGEHSESSTPRPRSSPEETIEPESLHQLFEGESETESFYGF. A phosphoserine mark is found at serine 1364 and serine 1367. Phosphothreonine is present on threonine 1368. 2 positions are modified to phosphoserine: serine 1373 and serine 1374. Threonine 1378 bears the Phosphothreonine mark. Positions 1380-1404 match the Integrase domain-binding motif (IBM) motif; it reads EPESLHQLFEGESETESFYGFEEAD. Serine 1392 is modified (phosphoserine; by CK2). Threonine 1394 bears the Phosphothreonine mark. Serine 1396 carries the post-translational modification Phosphoserine; by CK2.

As to quaternary structure, interacts with CBX1, CBX3, MAD2L2 and CHAMP1. Interacts with CBX5; POGZ competes with PXVXL motif-containing proteins such as INCENP and TRIM28 for interaction with CBX5. Interacts (via IBM motif) with PSIP1 isoform 1 (via IBD domain); phosphorylation increases its affinity for PSIP1. Interacts with HDGFL2. Phosphorylation increases its interaction with PSIP1.

Its subcellular location is the nucleus. The protein localises to the chromosome. It localises to the cytoplasm. Functionally, plays a role in mitotic cell cycle progression and is involved in kinetochore assembly and mitotic sister chromatid cohesion. Probably through its association with CBX5 plays a role in mitotic chromosome segregation by regulating aurora kinase B/AURKB activation and AURKB and CBX5 dissociation from chromosome arms. Promotes the repair of DNA double-strand breaks through the homologous recombination pathway. This chain is Pogo transposable element with ZNF domain (POGZ), found in Homo sapiens (Human).